A 191-amino-acid polypeptide reads, in one-letter code: Phosphoheptose isomerase (191 aa).

The SIS domain maps to 37–191 (ITSSLKQGGK…LILLIEQSLL (155 aa)). 52 to 54 (NGG) serves as a coordination point for substrate. Zn(2+) is bound by residues histidine 61 and glutamate 65. Substrate-binding positions include glutamate 65, 93 to 94 (ND), 119 to 121 (STS), serine 124, and glutamine 172. The Zn(2+) site is built by glutamine 172 and histidine 180.

Belongs to the SIS family. GmhA subfamily. The cofactor is Zn(2+).

Its subcellular location is the cytoplasm. It carries out the reaction 2 D-sedoheptulose 7-phosphate = D-glycero-alpha-D-manno-heptose 7-phosphate + D-glycero-beta-D-manno-heptose 7-phosphate. It participates in carbohydrate biosynthesis; D-glycero-D-manno-heptose 7-phosphate biosynthesis; D-glycero-alpha-D-manno-heptose 7-phosphate and D-glycero-beta-D-manno-heptose 7-phosphate from sedoheptulose 7-phosphate: step 1/1. Functionally, catalyzes the isomerization of sedoheptulose 7-phosphate in D-glycero-D-manno-heptose 7-phosphate. This is Phosphoheptose isomerase from Cytophaga hutchinsonii (strain ATCC 33406 / DSM 1761 / CIP 103989 / NBRC 15051 / NCIMB 9469 / D465).